Reading from the N-terminus, the 567-residue chain is Zinc finger protein 512 (567 aa).

The interval 1-32 is disordered; that stretch reads MSSRLGAVPATSGPTTFKQQRSTRIVGAKNSR. Positions 12–23 are enriched in polar residues; it reads SGPTTFKQQRST. Glycyl lysine isopeptide (Lys-Gly) (interchain with G-Cter in SUMO2) cross-links involve residues Lys-18 and Lys-84. Residues 86–148 are disordered; that stretch reads AATSHVEGSG…QARRIRKEPP (63 aa). Residues 119–130 show a composition bias toward basic residues; the sequence is KKHKLYGRKQRP. Residues 197–220 form a C2H2-type 1 zinc finger; that stretch reads FTCHHCGKQLRSLAGMKYHVMANH. Lys-227 participates in a covalent cross-link: Glycyl lysine isopeptide (Lys-Gly) (interchain with G-Cter in SUMO2). A C2H2-type 2 zinc finger spans residues 287–310; it reads LKCHHCGKPYRSKAGLAYHLRSEH. Lys-333 is covalently cross-linked (Glycyl lysine isopeptide (Lys-Gly) (interchain with G-Cter in SUMO2)). The C2H2-type 3; atypical zinc finger occupies 406-430; it reads IQCPNQGCEAVYSSVSGLKAHLGSC. The C2H2-type 4 zinc-finger motif lies at 440–463; it reads YKCLLCQKEFVSESGVKYHINSVH. The tract at residues 486 to 567 is disordered; it reads QRQQEEEKRR…PKTNHKRGRK (82 aa). The segment covering 495–508 has biased composition (basic residues); that stretch reads RQQHRSRRSLRRRQ. Basic and acidic residues predominate over residues 523-532; sequence VGKDQRRNNE. Positions 556–567 are enriched in basic residues; that stretch reads KPPKTNHKRGRK.

It belongs to the krueppel C2H2-type zinc-finger protein family.

The protein localises to the nucleus. In terms of biological role, may be involved in transcriptional regulation. The protein is Zinc finger protein 512 (ZNF512) of Pongo abelii (Sumatran orangutan).